A 622-amino-acid polypeptide reads, in one-letter code: Leucine-rich repeat and immunoglobulin-like domain-containing nogo receptor-interacting protein 1-B (622 aa).

A signal peptide spans 1–43 (MTFLQVTIKMVAREASGHSYLVACWQPILILMLGTVLSGSATG). 2 cysteine pairs are disulfide-bonded: Cys44–Cys50 and Cys48–Cys59. In terms of domain architecture, LRRNT spans 44 to 73 (CPSRCECSAQERSVVCHRRKLITLPEGIPI). The Extracellular segment spans residues 44–563 (CPSRCECSAQ…FDMKTLIIAT (520 aa)). 11 LRR repeats span residues 74 to 95 (DTRL…EFLN), 98 to 119 (QLED…AFSN), 122 to 143 (GLRT…VFTG), 146 to 167 (NLTR…MFQE), 170 to 191 (NLKE…AFHG), 194 to 215 (SLEQ…AFSH), 218 to 239 (NLLT…SFRR), 266 to 287 (NITT…AIQH), 290 to 311 (YLRF…KMHN), 314 to 335 (RLQA…SFKG), and 338 to 359 (YLRV…AFHS). Residue Asn146 is glycosylated (N-linked (GlcNAc...) asparagine). Asn204 is a glycosylation site (N-linked (GlcNAc...) asparagine). Asn266, Asn276, and Asn295 each carry an N-linked (GlcNAc...) asparagine glycan. Asn343 carries an N-linked (GlcNAc...) asparagine glycan. In terms of domain architecture, LRRCT spans 371-425 (NPLACDCRLLWVFRRRWRLNFNRQQPSCETPEFLQGKEFKDFPDVLPPNYFTCQK). Intrachain disulfides connect Cys375-Cys398, Cys377-Cys423, and Cys448-Cys499. The 103-residue stretch at 413-515 (PDVLPPNYFT…GNDTRLAHLH (103 aa)) folds into the Ig-like C2-type domain. Asn494, Asn507, Asn528, and Asn544 each carry an N-linked (GlcNAc...) asparagine glycan. A helical transmembrane segment spans residues 564–584 (TMGFISFLGVVLFCLVLLFLW). The Cytoplasmic segment spans residues 585 to 622 (SRGKGNAKPNIEIEYVPRKVDGENSPNEGSHKISMKMI).

Its subcellular location is the cell membrane. In terms of biological role, may play a role in regulating axonal regeneration and plasticity in the adult central nervous system. The chain is Leucine-rich repeat and immunoglobulin-like domain-containing nogo receptor-interacting protein 1-B (lingo1b) from Danio rerio (Zebrafish).